Consider the following 243-residue polypeptide: Phosphate-specific transport system accessory protein PhoU (243 aa).

Belongs to the PhoU family. In terms of assembly, homodimer. Interacts with phosphate regulon transcriptional regulatory protein PhoB and ferric uptake regulation protein Fur.

The protein localises to the cytoplasm. Part of the phosphate (Pho) regulon, which plays a key role in phosphate homeostasis. Encoded together with proteins of the phosphate-specific transport (Pst) system in the polycistronic pstSCAB-phoU operon. PhoU is essential for the repression of the Pho regulon at high phosphate conditions. In this role, it may bind, possibly as a chaperone, to PhoR, PhoB or a PhoR-PhoB complex to promote dephosphorylation of phospho-PhoB, or inhibit formation of the PhoR-PhoB transitory complex. This is Phosphate-specific transport system accessory protein PhoU from Edwardsiella tarda.